The sequence spans 361 residues: 5-formaminoimidazole-4-carboxamide-1-(beta)-D-ribofuranosyl 5'-monophosphate synthetase (361 aa).

Residues His-27 and Ser-94 each contribute to the 5-amino-1-(5-phospho-beta-D-ribosyl)imidazole-4-carboxamide site. The region spanning 116 to 348 (RAILRWEAER…MGQRIAKEIK (233 aa)) is the ATP-grasp domain. Residues 146–208 (PDEI…ANYC) and Glu-230 each bind ATP. Asn-258 is a binding site for 5-amino-1-(5-phospho-beta-D-ribosyl)imidazole-4-carboxamide. The Mg(2+) site is built by Gln-297 and Glu-310.

This sequence belongs to the phosphohexose mutase family. It depends on Mg(2+) as a cofactor. Requires Mn(2+) as cofactor.

The catalysed reaction is 5-amino-1-(5-phospho-beta-D-ribosyl)imidazole-4-carboxamide + formate + ATP = 5-formamido-1-(5-phospho-D-ribosyl)imidazole-4-carboxamide + ADP + phosphate. It participates in purine metabolism; IMP biosynthesis via de novo pathway; 5-formamido-1-(5-phospho-D-ribosyl)imidazole-4-carboxamide from 5-amino-1-(5-phospho-D-ribosyl)imidazole-4-carboxamide (formate route): step 1/1. In terms of biological role, catalyzes the ATP- and formate-dependent formylation of 5-aminoimidazole-4-carboxamide-1-beta-d-ribofuranosyl 5'-monophosphate (AICAR) to 5-formaminoimidazole-4-carboxamide-1-beta-d-ribofuranosyl 5'-monophosphate (FAICAR) in the absence of folates. The protein is 5-formaminoimidazole-4-carboxamide-1-(beta)-D-ribofuranosyl 5'-monophosphate synthetase of Methanococcus maripaludis (strain DSM 14266 / JCM 13030 / NBRC 101832 / S2 / LL).